The sequence spans 351 residues: Dihydroorotate dehydrogenase (quinone) (351 aa).

FMN is bound by residues A61–K65 and T85. Residue K65 coordinates substrate. N110–F114 contacts substrate. Positions 139 and 172 each coordinate FMN. N172 contributes to the substrate binding site. S175 functions as the Nucleophile in the catalytic mechanism. Residue N177 coordinates substrate. K217 and T245 together coordinate FMN. Residue N246–T247 participates in substrate binding. Residues G268, G297, and Y318–S319 each bind FMN.

Belongs to the dihydroorotate dehydrogenase family. Type 2 subfamily. In terms of assembly, monomer. The cofactor is FMN.

The protein localises to the cell membrane. The catalysed reaction is (S)-dihydroorotate + a quinone = orotate + a quinol. The protein operates within pyrimidine metabolism; UMP biosynthesis via de novo pathway; orotate from (S)-dihydroorotate (quinone route): step 1/1. Its function is as follows. Catalyzes the conversion of dihydroorotate to orotate with quinone as electron acceptor. In Xanthomonas campestris pv. campestris (strain 8004), this protein is Dihydroorotate dehydrogenase (quinone).